The primary structure comprises 125 residues: Phosphoribosyl-AMP cyclohydrolase (125 aa).

Residue Asp74 coordinates Mg(2+). Position 75 (Cys75) interacts with Zn(2+). Mg(2+) is bound by residues Asp76 and Asp78. Residues Cys92 and Cys99 each contribute to the Zn(2+) site.

Belongs to the PRA-CH family. Homodimer. It depends on Mg(2+) as a cofactor. Zn(2+) is required as a cofactor.

It is found in the cytoplasm. The catalysed reaction is 1-(5-phospho-beta-D-ribosyl)-5'-AMP + H2O = 1-(5-phospho-beta-D-ribosyl)-5-[(5-phospho-beta-D-ribosylamino)methylideneamino]imidazole-4-carboxamide. Its pathway is amino-acid biosynthesis; L-histidine biosynthesis; L-histidine from 5-phospho-alpha-D-ribose 1-diphosphate: step 3/9. In terms of biological role, catalyzes the hydrolysis of the adenine ring of phosphoribosyl-AMP. This chain is Phosphoribosyl-AMP cyclohydrolase, found in Geotalea uraniireducens (strain Rf4) (Geobacter uraniireducens).